The following is a 170-amino-acid chain: dCTP pyrophosphatase 1 (170 aa).

The tract at residues 1-25 is disordered; it reads MSQAGTGVCGNGGQEDSAAAGPFSF. The residue at position 2 (Ser2) is an N-acetylserine. Ser2 is modified (phosphoserine). Substrate contacts are provided by residues His38 and 47–51; that span reads WEQFH. Glu63 and Glu66 together coordinate Mg(2+). Trp73 contributes to the substrate binding site. Residues Glu95 and Asp98 each contribute to the Mg(2+) site. Tyr102 is a substrate binding site. The segment at 149-170 is disordered; that stretch reads LSENEAVGSGDPASELGNQAST.

As to quaternary structure, homotetramer. It depends on Mg(2+) as a cofactor.

Its subcellular location is the cytoplasm. The protein resides in the cytosol. It carries out the reaction dCTP + H2O = dCMP + diphosphate + H(+). Functionally, hydrolyzes deoxynucleoside triphosphates (dNTPs) to the corresponding nucleoside monophosphates. Has a strong preference for dCTP and its analogs including 5-iodo-dCTP and 5-methyl-dCTP for which it may even have a higher efficiency. May protect DNA or RNA against the incorporation of these genotoxic nucleotide analogs through their catabolism. This is dCTP pyrophosphatase 1 from Rattus norvegicus (Rat).